Here is a 257-residue protein sequence, read N- to C-terminus: Glutamate racemase (257 aa).

Residues 12 to 13 (DS) and 44 to 45 (YG) contribute to the substrate site. Cys75 (proton donor/acceptor) is an active-site residue. Residue 76–77 (NT) participates in substrate binding. Catalysis depends on Cys185, which acts as the Proton donor/acceptor. 186-187 (TH) contacts substrate.

Belongs to the aspartate/glutamate racemases family.

The enzyme catalyses L-glutamate = D-glutamate. Its pathway is cell wall biogenesis; peptidoglycan biosynthesis. In terms of biological role, provides the (R)-glutamate required for cell wall biosynthesis. This is Glutamate racemase from Clostridium botulinum (strain 657 / Type Ba4).